A 292-amino-acid chain; its full sequence is Sulfofructosephosphate aldolase (292 aa).

The Schiff-base intermediate with substrate role is filled by Lys-193.

This sequence belongs to the aldolase LacD family. As to quaternary structure, homotetramer.

It carries out the reaction 6-deoxy-6-sulfo-D-fructose 1-phosphate = (2S)-3-sulfolactaldehyde + dihydroxyacetone phosphate. Its function is as follows. Cleaves 6-deoxy-6-sulfo-D-fructose 1-phosphate (SFP) to form dihydroxyacetone phosphate (DHAP) and 3-sulfolactaldehyde (SLA). Can also catalyze the reverse reaction. This chain is Sulfofructosephosphate aldolase (yihT), found in Salmonella typhimurium (strain LT2 / SGSC1412 / ATCC 700720).